Consider the following 522-residue polypeptide: Man(5)GlcNAc(2)-PP-dolichol translocation protein RFT1 (522 aa).

10 helical membrane-spanning segments follow: residues 35 to 55 (DVLG…LFLT), 75 to 95 (LLWL…YLWY), 108 to 128 (VLLS…FSVI), 143 to 165 (FAIG…LFMF), 177 to 197 (AQYI…YIYI), 322 to 342 (VVGV…PVVI), 354 to 374 (GGAL…INGI), 400 to 420 (IIHL…GFIV), 457 to 477 (TSIF…LFAT), and 479 to 499 (PGLS…ILTA).

This sequence belongs to the RFT1 family.

The protein localises to the endoplasmic reticulum membrane. It participates in protein modification; protein glycosylation. Functionally, intramembrane glycolipid transporter that operates in the biosynthetic pathway of dolichol-linked oligosaccharides, the glycan precursors employed in protein asparagine (N)-glycosylation. The sequential addition of sugars to dolichol pyrophosphate produces dolichol-linked oligosaccharides containing fourteen sugars, including two GlcNAcs, nine mannoses and three glucoses. Once assembled, the oligosaccharide is transferred from the lipid to nascent proteins by oligosaccharyltransferases. The assembly of dolichol-linked oligosaccharides begins on the cytosolic side of the endoplasmic reticulum membrane and finishes in its lumen. RFT1 could mediate the translocation of the cytosolically oriented intermediate DolPP-GlcNAc2Man5, produced by ALG11, into the ER lumen where dolichol-linked oligosaccharides assembly continues. However, the intramembrane lipid transporter activity could not be confirmed in vitro. This Caenorhabditis elegans protein is Man(5)GlcNAc(2)-PP-dolichol translocation protein RFT1.